Here is a 523-residue protein sequence, read N- to C-terminus: Putative glycerol-3-phosphate transporter 1 (523 aa).

Helical transmembrane passes span 29–49, 102–122, 133–153, 163–183, 196–216, 228–248, 306–326, 344–364, 368–388, 402–422, 444–464, and 468–488; these read LSYS…YASY, VLLG…MYFA, IFLT…GVGY, FLIM…SVVA, LIMG…SLIA, FVVP…FLPV, FALC…WLPF, GNLS…AGYI, IGAR…ALFF, SLMF…TTAV, AIID…TGYI, and GSWT…GLLL.

The protein belongs to the major facilitator superfamily. Organophosphate:Pi antiporter (OPA) (TC 2.A.1.4) family.

The protein localises to the membrane. The protein is Putative glycerol-3-phosphate transporter 1 of Arabidopsis thaliana (Mouse-ear cress).